Consider the following 144-residue polypeptide: Ribosomal RNA large subunit methyltransferase H (144 aa).

S-adenosyl-L-methionine is bound by residues L68, G96, and 112–117 (FSKLTF).

The protein belongs to the RNA methyltransferase RlmH family. As to quaternary structure, homodimer.

It localises to the cytoplasm. It catalyses the reaction pseudouridine(1915) in 23S rRNA + S-adenosyl-L-methionine = N(3)-methylpseudouridine(1915) in 23S rRNA + S-adenosyl-L-homocysteine + H(+). In terms of biological role, specifically methylates the pseudouridine at position 1915 (m3Psi1915) in 23S rRNA. This Mycoplasmopsis synoviae (strain 53) (Mycoplasma synoviae) protein is Ribosomal RNA large subunit methyltransferase H.